Reading from the N-terminus, the 280-residue chain is Energy-coupling factor transporter ATP-binding protein EcfA2 (280 aa).

Residues 3–245 (IEFKNVSYTY…VELLESKQLG (243 aa)) enclose the ABC transporter domain. 40-47 (GHTGSGKS) lines the ATP pocket.

Belongs to the ABC transporter superfamily. Energy-coupling factor EcfA family. As to quaternary structure, forms a stable energy-coupling factor (ECF) transporter complex composed of 2 membrane-embedded substrate-binding proteins (S component), 2 ATP-binding proteins (A component) and 2 transmembrane proteins (T component).

Its subcellular location is the cell membrane. Its function is as follows. ATP-binding (A) component of a common energy-coupling factor (ECF) ABC-transporter complex. Unlike classic ABC transporters this ECF transporter provides the energy necessary to transport a number of different substrates. The sequence is that of Energy-coupling factor transporter ATP-binding protein EcfA2 from Streptococcus agalactiae serotype Ia (strain ATCC 27591 / A909 / CDC SS700).